A 342-amino-acid chain; its full sequence is Peroxisomal membrane protein import receptor PEX19 (342 aa).

Positions M1–E18 are enriched in acidic residues. Disordered regions lie at residues M1 to L68 and C119 to N141. Residues S41–D54 are compositionally biased toward basic and acidic residues. Phosphoserine is present on S62. S304 carries the phosphoserine modification. The disordered stretch occupies residues I321–Q342. The span at L331–Q342 shows a compositional bias: basic and acidic residues. At C339 the chain carries Cysteine methyl ester. The S-farnesyl cysteine moiety is linked to residue C339. A propeptide spans K340–Q342 (removed in mature form).

Belongs to the peroxin-19 family. In terms of assembly, interacts (farnesylated) with PEX3; farnesylation is required for this interaction. Interacts with PEX2, PEX5, PEX10, PEX11, PEX12, PEX13, PEX14, PEX17, PEX22, PEX25, PEX30 and PEX32; the interaction requires well-defined PEX19-binding sites within the peroxisomal membrane protein targeting signal (mPTS) of the PMPs and is independent on the presence of PEX3. Interacts with VPS1.

Its subcellular location is the cytoplasm. The protein resides in the peroxisome membrane. It is found in the endoplasmic reticulum membrane. In terms of biological role, required for proper post-translational import and stabilization of peroxisomal membrane proteins (PMPs). Acts as a cytosolic import receptor for PMPs and delivers them to the docking factor PEX3 at the peroxisomal membrane for subsequent insertion into the membrane. Acts as a chaperone in stabilizing or maintaining PMPs in the lipid bilayer. Directs PEX17, a peripheral component of the peroxisomal matrix protein translocation machinery, to peroxisomes. Stabilizes VPS1, a protein required for peroxisomal fission, at the peroxisomal membrane. Also acts in conjunction with PEX3 in the formation of peroxisomes from preperoxisomal compartments at the endoplasmic reticulum during de novo peroxisome synthesis, probably via the import of additional PMPs. In Saccharomyces cerevisiae (strain ATCC 204508 / S288c) (Baker's yeast), this protein is Peroxisomal membrane protein import receptor PEX19 (PEX19).